Here is a 388-residue protein sequence, read N- to C-terminus: Glutamate 5-kinase (388 aa).

Lys-21 is an ATP binding site. Positions 61, 148, and 160 each coordinate substrate. ATP-binding positions include 180–181 (TD) and 222–228 (TGGMITK). The 79-residue stretch at 285 to 363 (RGSVFLDPGA…RWLARELGAE (79 aa)) folds into the PUA domain.

Belongs to the glutamate 5-kinase family.

It is found in the cytoplasm. The catalysed reaction is L-glutamate + ATP = L-glutamyl 5-phosphate + ADP. The protein operates within amino-acid biosynthesis; L-proline biosynthesis; L-glutamate 5-semialdehyde from L-glutamate: step 1/2. Catalyzes the transfer of a phosphate group to glutamate to form L-glutamate 5-phosphate. This Thermobifida fusca (strain YX) protein is Glutamate 5-kinase.